A 358-amino-acid chain; its full sequence is Peptide chain release factor 1 (358 aa).

Gln-237 bears the N5-methylglutamine mark.

Belongs to the prokaryotic/mitochondrial release factor family. Methylated by PrmC. Methylation increases the termination efficiency of RF1.

The protein resides in the cytoplasm. Peptide chain release factor 1 directs the termination of translation in response to the peptide chain termination codons UAG and UAA. The chain is Peptide chain release factor 1 from Streptomyces avermitilis (strain ATCC 31267 / DSM 46492 / JCM 5070 / NBRC 14893 / NCIMB 12804 / NRRL 8165 / MA-4680).